The sequence spans 114 residues: Small ribosomal subunit protein bS6 (114 aa).

It belongs to the bacterial ribosomal protein bS6 family.

Binds together with bS18 to 16S ribosomal RNA. The chain is Small ribosomal subunit protein bS6 from Hydrogenovibrio crunogenus (strain DSM 25203 / XCL-2) (Thiomicrospira crunogena).